A 512-amino-acid polypeptide reads, in one-letter code: MRRFNLILLASLQLVGARSPGGFNIHEDLLTYPQFEVVFDNQYISEKDAHSLLDSQHPTYSADFAQSTLGQAREADARDNEAENKDQDGPSYKYELMKMPPNEYLCSIPILQSPEAENKTANELAKAEEARELTRATASGWELLSELQDSCLYFMSGWWSYSFCNNREIVQFHALPSIPNGQPPKRDPHTMEFTLGRVPAVPASAAHQAKMNGQEAPPPAELQVKGDQRYLVQRLEGGTICDLTGRERTIEVQYHCVPGMKADRIGWIKEVTICAYLMVVNTPRLCNDVAFLPPEETRANPITCKLILDKLNEPPSLDQTVPLAQDEAQVPLKQEDTGAKSGDAAPRDVGKEPINIGGVLVGARNVLSGADEAGKPPAKLPPPRSYFSNSNTDTERFLKVVASGKSKEDGGEMEVLGNEELEKLDLKPSVVKDMTERMRKLAGKYGWKLELVELPGGEKELRGYIDADEEELAKNKAKLKKEKEAAAKAKGDDEEEVVEGSEEQFFDKKDEL.

Residues 1–17 (MRRFNLILLASLQLVGA) form the signal peptide. Positions 71-91 (QAREADARDNEAENKDQDGPS) are disordered. Residues 73–88 (READARDNEAENKDQD) show a composition bias toward basic and acidic residues. Asparagine 118 carries N-linked (GlcNAc...) asparagine glycosylation. An MRH domain is found at 149 to 288 (DSCLYFMSGW…VVNTPRLCND (140 aa)). Residues cysteine 151 and cysteine 164 are joined by a disulfide bond. A mannooligosaccharide derivative is bound by residues tryptophan 158, tryptophan 159, glutamine 171, aspartate 242, arginine 248, glutamate 270, and tyrosine 276. 2 disulfides stabilise this stretch: cysteine 241–cysteine 274 and cysteine 256–cysteine 286. Disordered stretches follow at residues 329–349 (QVPLKQEDTGAKSGDAAPRDV) and 485–512 (AAAKAKGDDEEEVVEGSEEQFFDKKDEL). A compositionally biased stretch (acidic residues) spans 492–504 (DDEEEVVEGSEEQ). A Prevents secretion from ER motif is present at residues 509–512 (KDEL).

This sequence belongs to the OS-9 family. As to quaternary structure, interacts with missfolded ER lumenal proteins.

It localises to the endoplasmic reticulum membrane. Lectin involved in the quality control of the secretory pathway. As a member of the endoplasmic reticulum-associated degradation lumenal (ERAD-L) surveillance system, targets misfolded endoplasmic reticulum lumenal glycoproteins for degradation. In Gibberella zeae (strain ATCC MYA-4620 / CBS 123657 / FGSC 9075 / NRRL 31084 / PH-1) (Wheat head blight fungus), this protein is Protein OS-9 homolog (YOS1).